Consider the following 386-residue polypeptide: Probable mannan endo-1,4-beta-mannosidase A (386 aa).

A signal peptide spans 1 to 21 (MKLNPSLLTAAGLVSAQLASA). Trp-95 and Asn-207 together coordinate substrate. The active-site Proton donor is Glu-208. Residue Tyr-283 participates in substrate binding. The active-site Nucleophile is Glu-316. An N-linked (GlcNAc...) asparagine glycan is attached at Asn-336. Residue Trp-346 coordinates substrate.

The protein belongs to the glycosyl hydrolase 5 (cellulase A) family.

It localises to the secreted. It carries out the reaction Random hydrolysis of (1-&gt;4)-beta-D-mannosidic linkages in mannans, galactomannans and glucomannans.. Endo-1,4-mannanase, a crucial enzyme for depolymerization of seed galactomannans and wood galactoglucomannans. In Aspergillus oryzae (strain ATCC 42149 / RIB 40) (Yellow koji mold), this protein is Probable mannan endo-1,4-beta-mannosidase A (manA).